Reading from the N-terminus, the 218-residue chain is Ras-related protein Rab11E (218 aa).

20 to 27 (GDSGVGKS) lines the GTP pocket. Residues 42 to 50 (SKSTIGVEF) carry the Effector region motif. GTP is bound by residues 68–72 (DTAGQ) and 126–129 (NKSD). Residues Cys215 and Cys216 are each lipidated (S-geranylgeranyl cysteine).

Belongs to the small GTPase superfamily. Rab family.

The protein localises to the cell membrane. This chain is Ras-related protein Rab11E (RAB11E), found in Lotus japonicus (Lotus corniculatus var. japonicus).